A 458-amino-acid polypeptide reads, in one-letter code: Protochlorophyllide reductase, chloroplastic (458 aa).

This sequence belongs to the short-chain dehydrogenases/reductases (SDR) family. POR subfamily.

The protein resides in the plastid. Its subcellular location is the chloroplast. The enzyme catalyses chlorophyllide a + NADP(+) = protochlorophyllide a + NADPH + H(+). The protein operates within porphyrin-containing compound metabolism; chlorophyll biosynthesis. In terms of biological role, phototransformation of protochlorophyllide (Pchlide) to chlorophyllide (Chlide). The protein is Protochlorophyllide reductase, chloroplastic (PORA) of Marchantia paleacea (Liverwort).